The following is a 341-amino-acid chain: Glycerol-3-phosphate dehydrogenase [NAD(P)+] (341 aa).

NADPH is bound by residues S14, F15, R35, and K108. K108 and G136 together coordinate sn-glycerol 3-phosphate. Residue A140 coordinates NADPH. Residues K191, D244, S254, R255, and N256 each coordinate sn-glycerol 3-phosphate. Catalysis depends on K191, which acts as the Proton acceptor. An NADPH-binding site is contributed by R255. V279 and E281 together coordinate NADPH.

This sequence belongs to the NAD-dependent glycerol-3-phosphate dehydrogenase family.

Its subcellular location is the cytoplasm. It carries out the reaction sn-glycerol 3-phosphate + NAD(+) = dihydroxyacetone phosphate + NADH + H(+). The enzyme catalyses sn-glycerol 3-phosphate + NADP(+) = dihydroxyacetone phosphate + NADPH + H(+). The protein operates within membrane lipid metabolism; glycerophospholipid metabolism. Catalyzes the reduction of the glycolytic intermediate dihydroxyacetone phosphate (DHAP) to sn-glycerol 3-phosphate (G3P), the key precursor for phospholipid synthesis. The chain is Glycerol-3-phosphate dehydrogenase [NAD(P)+] from Pseudomonas putida (strain ATCC 700007 / DSM 6899 / JCM 31910 / BCRC 17059 / LMG 24140 / F1).